The primary structure comprises 204 residues: Somatotropin (204 aa).

The N-terminal stretch at 1–17 is a signal peptide; sequence MDRVILLLSVVSLGVSS. Gln-18 is subject to Pyrrolidone carboxylic acid. His-36 lines the Zn(2+) pocket. Cys-69 and Cys-177 are oxidised to a cystine. Glu-186 contacts Zn(2+). A disulfide bridge connects residues Cys-194 and Cys-202.

This sequence belongs to the somatotropin/prolactin family.

Its subcellular location is the secreted. Its function is as follows. Growth hormone plays an important role in growth control and is involved in the regulation of several anabolic processes. Implicated as an osmoregulatory substance important for seawater adaptation. In Sebastes schlegelii (Korean rockfish), this protein is Somatotropin (gh).